The primary structure comprises 657 residues: Tyrosine-protein phosphatase vhp-1 (657 aa).

The Rhodanese domain occupies 21-151 (APDTTLVVDC…FAQQYPQLCE (131 aa)). A Tyrosine-protein phosphatase domain is found at 175-318 (GITLITPNIY…LLEYENVLIK (144 aa)). C262 serves as the catalytic Phosphocysteine intermediate. Disordered regions lie at residues 353-426 (SNCV…MDLG), 539-563 (VPAG…SSSA), and 581-657 (PAST…PCHQ). A compositionally biased stretch (low complexity) spans 366–405 (SPSSPSVSEGSAASEPETSSSAASSSSTASAPPSMPSTSE). Residues 406 to 419 (QGTSSGTVNVNGKR) are compositionally biased toward polar residues. Low complexity-rich tracts occupy residues 542 to 563 (GSSS…SSSA) and 581 to 597 (PAST…TSRA).

Belongs to the protein-tyrosine phosphatase family. Non-receptor class dual specificity subfamily. As to quaternary structure, may interact with pmk-3. In terms of tissue distribution, expressed in the pharynx, intestine, neurons and vulval hypodermal cells.

The catalysed reaction is O-phospho-L-tyrosyl-[protein] + H2O = L-tyrosyl-[protein] + phosphate. Its function is as follows. Acts preferentially on the c-Jun N-terminal kinase (JNK) and p38 MAPKs. Plays an important role in the heavy metal stress response and in axon regeneration by negatively regulating the kgb-1 (JNK-like) and the pmk-1 (p38-type) MAPK signaling pathways. The polypeptide is Tyrosine-protein phosphatase vhp-1 (vhp-1) (Caenorhabditis elegans).